Reading from the N-terminus, the 88-residue chain is MAASRLPPATLTLKQFVRRQQVLLLYRRILQTIRQVPNDSDRKYLKDWAREEFRRNKSATEEDTIRMMITQGNMQLKELEKTLALAKS.

The transit peptide at 1–19 (MAASRLPPATLTLKQFVRR) directs the protein to the mitochondrion.

Belongs to the complex I LYR family.

The protein resides in the mitochondrion. Involved in efficient integration of the N-module into mitochondrial respiratory chain complex I. In Homo sapiens (Human), this protein is LYR motif-containing protein 2 (LYRM2).